Consider the following 288-residue polypeptide: MTQHFIVIGNPIAHSKSPEIHTLFGTQAGLDICYQRQYCPDDAASFTAVIEAFFHGGGVGANVTVPFKQIAYECCAARGGLSEHAKVAGAVNTLLLNKALLAKGVPPVEALFGDNTDGQGLVNHMQRLGWPLNGARVAIIGAGGAARGVVLPLIEAGIETLSIANRTVSKAEILVDELSTASEKINQHTIQTYATADLSGDFDIIINATSIGLSGETLPLTDKLNCQYAYDMMYGRELPFLQHFSIRGAQTSDGYGMLIGQAALSFERWTGRAIDVAQATTALENVST.

Shikimate contacts are provided by residues serine 15–serine 17 and threonine 64. The active-site Proton acceptor is lysine 68. Glutamate 83 contacts NADP(+). 2 residues coordinate shikimate: asparagine 92 and aspartate 117. Residues glycine 141 to alanine 145, asparagine 165 to lysine 170, and methionine 232 each bind NADP(+). Position 234 (tyrosine 234) interacts with shikimate. Glycine 254 is a binding site for NADP(+).

The protein belongs to the shikimate dehydrogenase family. Homodimer.

The catalysed reaction is shikimate + NADP(+) = 3-dehydroshikimate + NADPH + H(+). It functions in the pathway metabolic intermediate biosynthesis; chorismate biosynthesis; chorismate from D-erythrose 4-phosphate and phosphoenolpyruvate: step 4/7. Involved in the biosynthesis of the chorismate, which leads to the biosynthesis of aromatic amino acids. Catalyzes the reversible NADPH linked reduction of 3-dehydroshikimate (DHSA) to yield shikimate (SA). This Psychrobacter cryohalolentis (strain ATCC BAA-1226 / DSM 17306 / VKM B-2378 / K5) protein is Shikimate dehydrogenase (NADP(+)).